The sequence spans 129 residues: uncharacterized protein (129 aa).

Positions 1–129 (MGRMASPLRS…PARQSARMAR (129 aa)) are disordered. Basic and acidic residues predominate over residues 18–46 (ESTRHKETSTVRVETSSHREETSSHRVET). Residues 47–59 (SSRQVRTSSRQVE) show a composition bias toward low complexity. A compositionally biased stretch (polar residues) spans 70–97 (LTPSTKRLPQFLEVSSQHVETSSQCTET).

This is an uncharacterized protein from Mus musculus (Mouse).